We begin with the raw amino-acid sequence, 452 residues long: GATA-binding factor 2 (452 aa).

Positions 130 to 182 (GGSLYPGTGSSACPSSSHSSPHLFGFPPTPPKDVSPDPGPASPPSSSRLEDKD) are disordered. The span at 139-151 (SSACPSSSHSSPH) shows a compositional bias: low complexity. Over residues 156 to 172 (PPTPPKDVSPDPGPASP) the composition is skewed to pro residues. GATA-type zinc fingers lie at residues 267–291 (CVNC…CNAC) and 321–345 (CANC…CNAC). Polar residues predominate over residues 426–438 (QTPTPIHPSSSLS). The tract at residues 426 to 452 (QTPTPIHPSSSLSFGHPHHSSMVTAMG) is disordered.

As to expression, expressed in the developing ventral blood island, and in the embryonic nervous system.

Its subcellular location is the nucleus. In Xenopus laevis (African clawed frog), this protein is GATA-binding factor 2 (gata2).